The primary structure comprises 373 residues: Thyroid hormone receptor beta (373 aa).

A modulating region spans residues 1-18 (MPSSMSGYIPSYLDKDEL). C19, C22, C36, C39, C57, C63, C73, and C76 together coordinate Zn(2+). 2 consecutive NR C4-type zinc fingers follow at residues 19-39 (CVVCGDKATGYHYRCITCEGC) and 57-81 (CKYEGKCVIDKVTRNQCQECRFKKC). A DNA-binding region (nuclear receptor) is located at residues 19–93 (CVVCGDKATG…VGMATDLVLD (75 aa)). Residues 129–373 (EEWELIQVVT…PPLFLEVFED (245 aa)) enclose the NR LBD domain. Residues R194, N243, and H347 each coordinate 3,3',5-triiodo-L-thyronine. Residues R194, N243, and H347 each contribute to the L-thyroxine site.

This sequence belongs to the nuclear hormone receptor family. NR1 subfamily.

The protein localises to the nucleus. In terms of biological role, nuclear hormone receptor that can act as a repressor or activator of transcription. High affinity receptor for thyroid hormones, including triiodothyronine and thyroxine. The protein is Thyroid hormone receptor beta (thrb) of Aquarana catesbeiana (American bullfrog).